Reading from the N-terminus, the 1458-residue chain is GTPase-activating protein and VPS9 domain-containing protein 1 (1458 aa).

Residues 147 to 385 form the Ras-GAP domain; the sequence is SYLLQVLRYL…AAFLDVVIGG (239 aa). Position 227 is a phosphoserine (Ser-227). Phosphothreonine occurs at positions 390 and 458. The interval 447–475 is disordered; the sequence is AKPGKSSSLDMTPYSTPQMSPATTPANKK. Polar residues predominate over residues 451 to 473; the sequence is KSSSLDMTPYSTPQMSPATTPAN. Position 460 is a phosphotyrosine (Tyr-460). At Ser-466 the chain carries Phosphoserine. Phosphothreonine is present on Thr-470. A phosphoserine mark is found at Ser-566 and Ser-569. 3 disordered regions span residues 574–608, 738–821, and 846–867; these read GISE…GSNG, LESC…PSQS, and HYAR…VGGN. Residues 578-588 show a composition bias toward polar residues; sequence GPSNRSNSVSS. Phosphoserine occurs at positions 742, 746, and 757. Over residues 758–777 the composition is skewed to polar residues; sequence SRPSTPGLSVVSGISATSED. Thr-762 carries the post-translational modification Phosphothreonine. Ser-766 is subject to Phosphoserine. Residues 778 to 789 are compositionally biased toward basic and acidic residues; that stretch reads IPNKIEDLRSEC. Phosphoserine is present on residues Ser-876, Ser-902, Ser-903, Ser-908, and Ser-914. Residues 888 to 902 show a composition bias toward basic and acidic residues; it reads KQRHSYPERLVRSRS. Disordered stretches follow at residues 888–1022 and 1039–1072; these read KQRH…RLSA and KRTS…EEAL. Over residues 930 to 951 the composition is skewed to low complexity; that stretch reads AAATGATSLVAAPHSSSSSPSK. Basic and acidic residues-rich tracts occupy residues 952 to 973 and 995 to 1006; these read DSSR…DRSR and EKQEKDKDDLGP. The residue at position 964 (Ser-964) is a Phosphoserine. A compositionally biased stretch (polar residues) spans 1010–1022; that stretch reads STLTDEPSPRLSA. Phosphoserine is present on residues Ser-1017 and Ser-1044. Positions 1061–1071 are enriched in basic and acidic residues; it reads ESAHDSPREEA. Phosphoserine occurs at positions 1076 and 1083. The region spanning 1318–1458 is the VPS9 domain; it reads ILRDQVLHEH…EFIKTIDDRK (141 aa).

The protein belongs to the GAPVD1 family. As to quaternary structure, interacts with RAB5A. Interacts with TRIP10/CIP4. In terms of tissue distribution, present in adipocytes and fibroblasts (at protein level). Ubiquitously expressed.

It is found in the membrane. The protein resides in the endosome. Acts both as a GTPase-activating protein (GAP) and a guanine nucleotide exchange factor (GEF), and participates in various processes such as endocytosis, insulin receptor internalization or LC2A4/GLUT4 trafficking. Acts as a GEF for the Ras-related protein RAB31 by exchanging bound GDP for free GTP, leading to regulate LC2A4/GLUT4 trafficking. In the absence of insulin, it maintains RAB31 in an active state and promotes a futile cycle between LC2A4/GLUT4 storage vesicles and early endosomes, retaining LC2A4/GLUT4 inside the cells. Upon insulin stimulation, it is translocated to the plasma membrane, releasing LC2A4/GLUT4 from intracellular storage vesicles. Also involved in EGFR trafficking and degradation, possibly by promoting EGFR ubiquitination and subsequent degradation by the proteasome. Has GEF activity for Rab5 and GAP activity for Ras. In Mus musculus (Mouse), this protein is GTPase-activating protein and VPS9 domain-containing protein 1 (Gapvd1).